Reading from the N-terminus, the 1412-residue chain is DNA-directed RNA polymerase subunit beta' (1412 aa).

Residues Cys-70, Cys-72, Cys-85, and Cys-88 each contribute to the Zn(2+) site. Residues Asp-460, Asp-462, and Asp-464 each contribute to the Mg(2+) site. Zn(2+) is bound by residues Cys-819, Cys-893, Cys-900, and Cys-903. Residues Ala-1391–Glu-1412 form a disordered region.

The protein belongs to the RNA polymerase beta' chain family. As to quaternary structure, the RNAP catalytic core consists of 2 alpha, 1 beta, 1 beta' and 1 omega subunit. When a sigma factor is associated with the core the holoenzyme is formed, which can initiate transcription. It depends on Mg(2+) as a cofactor. Requires Zn(2+) as cofactor.

The enzyme catalyses RNA(n) + a ribonucleoside 5'-triphosphate = RNA(n+1) + diphosphate. Its function is as follows. DNA-dependent RNA polymerase catalyzes the transcription of DNA into RNA using the four ribonucleoside triphosphates as substrates. This is DNA-directed RNA polymerase subunit beta' from Paraburkholderia xenovorans (strain LB400).